An 808-amino-acid polypeptide reads, in one-letter code: MAGTVVLDDVELREAQRDYLDFLDDEEDQGIYQSKVRELISDNQYRLIVNVNDLRRKNEKRANRLLSNAFEELVAFQRALKDFVASIDATYAKQYEEFYIGLEGSFGSKHVSPRTLTSCFLSCVVCVEGIVTKCSLVRPKVVRSVHYCPATKKTIERRYSDLTSLVAFPSSSVYPTKDEENNPLETEYGLSVYKDHQIITIQEMPEKAPAGQLPRSVDVILDDDLVDRVKPGDRVQVVGTYRCLPGKKGGYTSGTFRTVLIACNVKQMSKDVQPSFSAEDIAKIKKFSKTRSKDIFDQLARSLAPSIHGHDYVKKAILCLLLGGVERDLENGSHIRGDINILLIGDPSVAKSQLLRYVLCTAPRAIPTTGRGSSGVGLTAAVTTDQETGERRLEAGAMVLADRGVVCIDEFDKMSDMDRTAIHEVMEQGRVTIAKAGIHARLNARCSVLAAANPVYGRYDQYKTPMENIGLQDSLLSRFDLLFIMLDQMDPEQDREISDHVLRMHRYRAPGEQDGDAMPLGSAVDILATDDPNFSPDDQQDTQIYEKHDNLLHGIKKKKEKMVSAAFMRKYIHVAKIIKPVLTQESAAYIAEEYSRLRSQDSMSSDTARTSPVTARTLETLIRLATAHAKARMSKTVDLQDAEEAVELVQYAYFKKVLEKEKKRKKRSEDESDAEDEVEKSQEDQEQKTKRRRICPSDAKEGDSYDPYDFTNTEEEMPQVHTPKATDSQETKESQKVELSESRLKAFKAALLEVFREAHAQSVGMNRLTESVNRDNEEPFSSAEIQAALSRMQDDNQVMVSEGIVFLI.

The residue at position 2 (Ala2) is an N-acetylalanine. Phosphoserine occurs at positions 160 and 275. At Lys293 the chain carries N6-acetyllysine. The MCM domain maps to 295–502 (IFDQLARSLA…QDREISDHVL (208 aa)). Positions 353, 393, 394, 395, and 397 each coordinate ADP. The Arginine finger motif lies at 477 to 480 (SRFD). Ala523 serves as a coordination point for ATP. Ser535 is subject to Phosphoserine; by ATM. An N6-acetyllysine modification is found at Lys547. Phosphoserine is present on Ser611. Residues 662-739 (KKRKKRSEDE…ETKESQKVEL (78 aa)) are disordered. Residue Arg664 coordinates ATP. 3 positions are modified to phosphoserine: Ser668, Ser672, and Ser681. Positions 679–688 (EKSQEDQEQK) are enriched in basic and acidic residues. Tyr708 is modified (phosphotyrosine). Phosphothreonine is present on residues Thr713 and Thr722. Residues 727–739 (DSQETKESQKVEL) show a composition bias toward basic and acidic residues. Ser728 and Ser734 each carry phosphoserine.

The protein belongs to the MCM family. As to quaternary structure, component of the MCM2-7 complex. The complex forms a toroidal hexameric ring with the proposed subunit order MCM2-MCM6-MCM4-MCM7-MCM3-MCM5. Component of the CMG helicase complex, a hexameric ring of related MCM2-7 subunits stabilized by CDC45 and the tetrameric GINS complex. Associated with the replication-specific DNA polymerase alpha. Interacts with MCMBP. Interacts with ANKRD17. Interacts with MCM3AP isoform MCM3AP; this interaction leads to MCM3 acetylation. Post-translationally, acetylated by MCM3AP. In terms of processing, O-glycosylated (O-GlcNAcylated), in a cell cycle-dependent manner.

The protein resides in the nucleus. The protein localises to the chromosome. It catalyses the reaction ATP + H2O = ADP + phosphate + H(+). Functionally, acts as a component of the MCM2-7 complex (MCM complex) which is the replicative helicase essential for 'once per cell cycle' DNA replication initiation and elongation in eukaryotic cells. Core component of CDC45-MCM-GINS (CMG) helicase, the molecular machine that unwinds template DNA during replication, and around which the replisome is built. The active ATPase sites in the MCM2-7 ring are formed through the interaction surfaces of two neighboring subunits such that a critical structure of a conserved arginine finger motif is provided in trans relative to the ATP-binding site of the Walker A box of the adjacent subunit. The six ATPase active sites, however, are likely to contribute differentially to the complex helicase activity. Required for the entry in S phase and for cell division. The protein is DNA replication licensing factor MCM3 (MCM3) of Bos taurus (Bovine).